Here is a 351-residue protein sequence, read N- to C-terminus: dTDP-glucose 4,6-dehydratase (351 aa).

Residues Phe-12–Ile-13, Asp-32–Thr-35, Asp-58–Ile-59, Phe-80–Ser-84, and Thr-99 contribute to the NAD(+) site. Ser-84 provides a ligand contact to substrate. Residue Thr-133 coordinates substrate. The active-site Proton donor is Asp-134. Residues Glu-135 and Tyr-158 each act as proton acceptor in the active site. Tyr-158–Lys-162 contributes to the NAD(+) binding site. Residue Asn-187 participates in substrate binding. Asn-188 is an NAD(+) binding site. Substrate is bound by residues Lys-197–Leu-198, Pro-213–Tyr-215, Arg-222, Asn-257, and Asp-289–His-293.

The protein belongs to the NAD(P)-dependent epimerase/dehydratase family. dTDP-glucose dehydratase subfamily. In terms of assembly, homodimer. NAD(+) is required as a cofactor.

The enzyme catalyses dTDP-alpha-D-glucose = dTDP-4-dehydro-6-deoxy-alpha-D-glucose + H2O. It participates in carbohydrate biosynthesis; dTDP-L-rhamnose biosynthesis. Its pathway is bacterial outer membrane biogenesis; LPS O-antigen biosynthesis. Catalyzes the dehydration of dTDP-D-glucose to form dTDP-6-deoxy-D-xylo-4-hexulose via a three-step process involving oxidation, dehydration and reduction. The chain is dTDP-glucose 4,6-dehydratase (rfbB) from Xanthomonas campestris pv. campestris (strain ATCC 33913 / DSM 3586 / NCPPB 528 / LMG 568 / P 25).